Reading from the N-terminus, the 97-residue chain is Histone H1.C2 (97 aa).

A disordered region spans residues 24–97 (AAVPPKKAAP…KKAVKKAPKK (74 aa)). The span at 31–97 (AAPKKAVAKK…KKAVKKAPKK (67 aa)) shows a compositional bias: basic residues.

It localises to the nucleus. The protein resides in the chromosome. This chain is Histone H1.C2, found in Trypanosoma cruzi.